We begin with the raw amino-acid sequence, 99 residues long: Essential MCU regulator, mitochondrial (99 aa).

Residues 1–39 constitute a mitochondrion transit peptide; the sequence is MAARVGVLSVAGFRAAARAGGLLRASKQSSAVSHVPCRT. The Mitochondrial matrix segment spans residues 40 to 57; it reads AIATSAGTVLPKPEKVSF. The chain crosses the membrane as a helical span at residues 58–77; the sequence is GLLRVFTVVIPFLYIGTLIS. The Mitochondrial intermembrane segment spans residues 78 to 99; sequence KNFAALLEEHDIFVPEDDDDDD.

Belongs to the SMDT1/EMRE family. In terms of assembly, component of the uniplex complex.

The protein localises to the mitochondrion inner membrane. Essential regulatory subunit of the mitochondrial calcium uniporter complex (uniplex), a complex that mediates calcium uptake into mitochondria. Required to bridge the calcium-sensing proteins micu1 with the calcium-conducting subunit mcu. Acts by mediating activation of mcu and retention of micu1 to the mcu pore, in order to ensure tight regulation of the uniplex complex and appropriate responses to intracellular calcium signaling. The sequence is that of Essential MCU regulator, mitochondrial from Xenopus tropicalis (Western clawed frog).